Reading from the N-terminus, the 424-residue chain is Serine hydroxymethyltransferase 2 (424 aa).

Residues Leu-125 and 129 to 131 each bind (6S)-5,6,7,8-tetrahydrofolate; that span reads GHL. Lys-234 is subject to N6-(pyridoxal phosphate)lysine. Residue Glu-250 coordinates (6S)-5,6,7,8-tetrahydrofolate.

The protein belongs to the SHMT family. As to quaternary structure, homodimer. Requires pyridoxal 5'-phosphate as cofactor.

Its subcellular location is the cytoplasm. It carries out the reaction (6R)-5,10-methylene-5,6,7,8-tetrahydrofolate + glycine + H2O = (6S)-5,6,7,8-tetrahydrofolate + L-serine. It participates in one-carbon metabolism; tetrahydrofolate interconversion. The protein operates within amino-acid biosynthesis; glycine biosynthesis; glycine from L-serine: step 1/1. Functionally, catalyzes the reversible interconversion of serine and glycine with tetrahydrofolate (THF) serving as the one-carbon carrier. This reaction serves as the major source of one-carbon groups required for the biosynthesis of purines, thymidylate, methionine, and other important biomolecules. Also exhibits THF-independent aldolase activity toward beta-hydroxyamino acids, producing glycine and aldehydes, via a retro-aldol mechanism. This Burkholderia pseudomallei (strain 1710b) protein is Serine hydroxymethyltransferase 2.